A 317-amino-acid polypeptide reads, in one-letter code: Glycine--tRNA ligase alpha subunit (317 aa).

This sequence belongs to the class-II aminoacyl-tRNA synthetase family. As to quaternary structure, tetramer of two alpha and two beta subunits.

Its subcellular location is the cytoplasm. It carries out the reaction tRNA(Gly) + glycine + ATP = glycyl-tRNA(Gly) + AMP + diphosphate. This is Glycine--tRNA ligase alpha subunit from Cupriavidus metallidurans (strain ATCC 43123 / DSM 2839 / NBRC 102507 / CH34) (Ralstonia metallidurans).